We begin with the raw amino-acid sequence, 189 residues long: Glucose-6-phosphate isomerase (189 aa).

4 residues coordinate Fe cation: H88, H90, E97, and H136.

Belongs to the archaeal-type GPI family. As to quaternary structure, homodimer.

It is found in the cytoplasm. It carries out the reaction alpha-D-glucose 6-phosphate = beta-D-fructose 6-phosphate. Its pathway is carbohydrate degradation; glycolysis; D-glyceraldehyde 3-phosphate and glycerone phosphate from D-glucose: step 2/4. This Thermococcus onnurineus (strain NA1) protein is Glucose-6-phosphate isomerase.